The primary structure comprises 365 residues: MNTFGRELRITTFGESHGKAIGVVIDGVPAGLELTEEDIKRELERRMFCHIPVLNPRCEPEEVEILSGVKEGYTQGTPIAVVIWNRRVISSYYEELWMKPRPGHADFAYYLKYGRHYDHRGGGRASGRTTAAVVAAGAVAKKMLALAGAEVAGHIVELGGVEINASYTYEDVKKSWGRPLPVVDQQALDKMLEKIREAAMRGDSIGGGVEVWAVGVPPGLGEPHFGKIKADIAAAAFSIPGAIALDWGMGRALAKMWGSEANDPITVANGRPTLATNKIGGVLGGITVGTPIYFRAWFKPTPSVRKPQQTVDLAKMEPTTIEFKGRYDVSIVPKALVALEAITAVALADHLLRAGLIRRDKPLGR.

Residue Arg46 coordinates NADP(+). Residues 124–126 (RAS), Gly284, 299–303 (KPTPS), and Arg326 each bind FMN.

It belongs to the chorismate synthase family. It depends on FMNH2 as a cofactor.

The enzyme catalyses 5-O-(1-carboxyvinyl)-3-phosphoshikimate = chorismate + phosphate. It participates in metabolic intermediate biosynthesis; chorismate biosynthesis; chorismate from D-erythrose 4-phosphate and phosphoenolpyruvate: step 7/7. Functionally, catalyzes the anti-1,4-elimination of the C-3 phosphate and the C-6 proR hydrogen from 5-enolpyruvylshikimate-3-phosphate (EPSP) to yield chorismate, which is the branch point compound that serves as the starting substrate for the three terminal pathways of aromatic amino acid biosynthesis. This reaction introduces a second double bond into the aromatic ring system. The chain is Chorismate synthase from Pyrobaculum neutrophilum (strain DSM 2338 / JCM 9278 / NBRC 100436 / V24Sta) (Thermoproteus neutrophilus).